The primary structure comprises 201 residues: Histidinol dehydrogenase (201 aa).

The protein belongs to the histidinol dehydrogenase family. As to quaternary structure, homodimer. Requires Zn(2+) as cofactor.

The enzyme catalyses L-histidinol + 2 NAD(+) + H2O = L-histidine + 2 NADH + 3 H(+). It functions in the pathway amino-acid biosynthesis; L-histidine biosynthesis; L-histidine from 5-phospho-alpha-D-ribose 1-diphosphate: step 9/9. In terms of biological role, catalyzes the sequential NAD-dependent oxidations of L-histidinol to L-histidinaldehyde and then to L-histidine. The protein is Histidinol dehydrogenase (hisD) of Buchnera aphidicola subsp. Diuraphis noxia.